A 125-amino-acid polypeptide reads, in one-letter code: Alpha-endosulfine (125 aa).

A compositionally biased stretch (basic and acidic residues) spans 1-37 (MSDKYIGDSHLEETGEEKQDSQEKEAVTPEKAEEQKL). Positions 1–52 (MSDKYIGDSHLEETGEEKQDSQEKEAVTPEKAEEQKLKAKYPNLGQKPGGSD) are disordered. The residue at position 28 (Thr28) is a Phosphothreonine; by CDK2. The residue at position 67 (Ser67) is a Phosphoserine; by GWL. Positions 86-107 (GPDKNLVTGDHIPTPQDLPQRK) are disordered. Thr99 carries the phosphothreonine; by CDK2 modification. Position 109 is a phosphoserine; by PKA (Ser109).

Belongs to the endosulfine family. In terms of assembly, interacts (when phosphorylated at Ser-67) with ppp2r2d. Post-translationally, phosphorylation at Ser-67 by gwl during mitosis is essential for interaction with PPP2R2D (PR55-delta) and subsequent inactivation of PP2A. Phosphorylated by PKA.

It is found in the cytoplasm. Functionally, protein phosphatase inhibitor that specifically inhibits protein phosphatase 2A (PP2A) during mitosis. When phosphorylated at Ser-67 during mitosis, specifically interacts with ppp2r2d (PR55-delta) and inhibits its activity, leading to inactivation of PP2A, an essential condition to keep cyclin-B1-CDK1 activity high during M phase. In Xenopus laevis (African clawed frog), this protein is Alpha-endosulfine (ensa).